A 389-amino-acid polypeptide reads, in one-letter code: Major outer membrane porin (389 aa).

Residues 1–23 (MKKLLKSALLSAAFAGSVGSLQA) form the signal peptide.

It belongs to the chlamydial porin (CP) (TC 1.B.2) family. Part of a disulfide cross-linked outer membrane complex (COMC) composed of the major outer membrane porin (MOMP), the small cysteine-rich protein (OmcA) and the large cysteine-rich periplasmic protein (OmcB).

The protein resides in the cell outer membrane. Its function is as follows. In elementary bodies (EBs, the infectious stage, which is able to survive outside the host cell) provides the structural integrity of the outer envelope through disulfide cross-links with the small cysteine-rich protein and the large cysteine-rich periplasmic protein. It has been described in publications as the Sarkosyl-insoluble COMC (Chlamydia outer membrane complex), and serves as the functional equivalent of peptidoglycan. In terms of biological role, permits diffusion of specific solutes through the outer membrane. The chain is Major outer membrane porin (ompA) from Chlamydia pneumoniae (Chlamydophila pneumoniae).